The chain runs to 673 residues: uncharacterized protein (673 aa).

The tract at residues 1-95 (MLNGEKSALG…QSSAIADSIG (95 aa)) is disordered. Residues 13–40 (PSNSNSSSKLNAKSPNFIPSSSNIPRSS) are compositionally biased toward low complexity. Positions 42–60 (KTKEHSADRKPHRNSEKKT) are enriched in basic and acidic residues. Residues 214–273 (CPFCLEEKPVAARMSRCGHVYCFSCLLRFVETPTAAEVKAAETSGTKIVKCGHRSCPICW) form an RING-type zinc finger. The interval 649 to 673 (SAPSKNSKNKKKKKLVLLSTGAAHR) is disordered.

The protein localises to the cytoplasm. It localises to the nucleus. This is an uncharacterized protein from Schizosaccharomyces pombe (strain 972 / ATCC 24843) (Fission yeast).